A 251-amino-acid polypeptide reads, in one-letter code: UDP-N-acetylglucosamine--dolichyl-phosphate N-acetylglucosaminyltransferase (251 aa).

The helical transmembrane segment at 150–167 (VGNLGLSFITFLLGGYYV) threads the bilayer.

It belongs to the glycosyltransferase 2 family.

It localises to the cell membrane. It carries out the reaction a di-trans,poly-cis-dolichyl phosphate + UDP-N-acetyl-alpha-D-glucosamine = an N-acetyl-alpha-D-glucosaminyl-phospho-di-trans,poly-cis-dolichol + UDP. The protein operates within cell surface structure biogenesis; S-layer biogenesis. Its pathway is protein modification; protein glycosylation. Its function is as follows. Involved in the assembly of an N-linked disaccharide that decorates the S-layer glycoprotein and flagellins. AglK initiates N-linked glycosylation through the formation of alpha-linked dolichyl monophosphate N-acetylglucosamine. It catalyzes the transfer of GlcNAc from the donor substrate UDP-GlcNAc to dolichyl phosphate C55 (Dol-P) to yield Dol-P-GlcNAc. AglK reaction proceeds with retention of stereochemistry. The reaction is specific for UDP-GlcNAc. AglK shows a stronger preference for short dolichol (C55-60 Dol-P) substrates compared with the longer (C85-105 Dol-P). The polypeptide is UDP-N-acetylglucosamine--dolichyl-phosphate N-acetylglucosaminyltransferase (Methanococcus voltae).